We begin with the raw amino-acid sequence, 176 residues long: Nucleoside triphosphate/diphosphate phosphatase (176 aa).

The Proton donor role is filled by arginine 23. The Mg(2+) site is built by asparagine 87, aspartate 103, aspartate 105, aspartate 107, aspartate 120, and glutamate 123.

Belongs to the Ntdp family. Requires Mg(2+) as cofactor.

The enzyme catalyses a ribonucleoside 5'-triphosphate + H2O = a ribonucleoside 5'-diphosphate + phosphate + H(+). It carries out the reaction a ribonucleoside 5'-diphosphate + H2O = a ribonucleoside 5'-phosphate + phosphate + H(+). In terms of biological role, has nucleoside phosphatase activity towards nucleoside triphosphates and nucleoside diphosphates. This is Nucleoside triphosphate/diphosphate phosphatase from Bacillus pumilus (strain SAFR-032).